A 592-amino-acid chain; its full sequence is Probable translation initiation factor IF-2 (592 aa).

One can recognise a tr-type G domain in the interval 5–226 (IRSPFVVVMG…AGVSQRFIPR (222 aa)). The G1 stretch occupies residues 14–21 (GHVDVGKT). Position 14–21 (14–21 (GHVDVGKT)) interacts with GTP. The G2 stretch occupies residues 39-43 (MITQH). The G3 stretch occupies residues 80–83 (DTPG). GTP-binding positions include 80-84 (DTPGH) and 134-137 (NKLD). Residues 134–137 (NKLD) form a G4 region. Positions 202 to 204 (SAV) are G5.

This sequence belongs to the TRAFAC class translation factor GTPase superfamily. Classic translation factor GTPase family. IF-2 subfamily.

Its function is as follows. Function in general translation initiation by promoting the binding of the formylmethionine-tRNA to ribosomes. Seems to function along with eIF-2. The polypeptide is Probable translation initiation factor IF-2 (Pyrobaculum calidifontis (strain DSM 21063 / JCM 11548 / VA1)).